A 126-amino-acid chain; its full sequence is SNRPMPLNLYQFKNMIQCTVPSRSWQDFADYGCYCGKGGSGTPVDDLDRCCQVHDNCYNEAENISGCRPYFKTYSYECTQGTLTCKGDNNACAASVCDCDRLAAICFAGAPYNDANYNIDLKARCN.

Residues Ser-1 to Leu-7 constitute a propeptide that is removed on maturation. Cystine bridges form between Cys-18/Cys-78, Cys-33/Cys-125, Cys-35/Cys-51, Cys-50/Cys-106, Cys-57/Cys-99, Cys-67/Cys-92, and Cys-85/Cys-97. Ca(2+)-binding residues include Tyr-34, Gly-36, and Gly-38. Residue His-54 is part of the active site. Asp-55 is a Ca(2+) binding site. Asp-100 is an active-site residue.

This sequence belongs to the phospholipase A2 family. Group I subfamily. D49 sub-subfamily. The cofactor is Ca(2+). As to expression, expressed by the venom gland.

The protein resides in the secreted. The catalysed reaction is a 1,2-diacyl-sn-glycero-3-phosphocholine + H2O = a 1-acyl-sn-glycero-3-phosphocholine + a fatty acid + H(+). Its function is as follows. PLA2 catalyzes the calcium-dependent hydrolysis of the 2-acyl groups in 3-sn-phosphoglycerides. The chain is Acidic phospholipase A2 3 from Naja sagittifera (Andaman cobra).